The primary structure comprises 237 residues: Large ribosomal subunit protein uL3 (237 aa).

Disordered regions lie at residues Ala-133 to Lys-155 and Pro-213 to Glu-237. Residues His-135–Arg-150 show a composition bias toward polar residues. Residue Gln-151 is modified to N5-methylglutamine. Over residues Ala-220–Glu-237 the composition is skewed to low complexity.

The protein belongs to the universal ribosomal protein uL3 family. In terms of assembly, part of the 50S ribosomal subunit. Forms a cluster with proteins L14 and L19. Methylated by PrmB.

In terms of biological role, one of the primary rRNA binding proteins, it binds directly near the 3'-end of the 23S rRNA, where it nucleates assembly of the 50S subunit. This chain is Large ribosomal subunit protein uL3, found in Brucella abortus (strain S19).